Consider the following 292-residue polypeptide: Acetyl-coenzyme A carboxylase carboxyl transferase subunit beta (292 aa).

Positions 29 to 292 constitute a CoA carboxyltransferase N-terminal domain; that stretch reads LWSKCPECGQ…HGCESRVASS (264 aa). Zn(2+) contacts are provided by Cys-33, Cys-36, Cys-52, and Cys-55. The C4-type zinc-finger motif lies at 33 to 55; the sequence is CPECGQVVYRKDLLSNASVCGNC.

It belongs to the AccD/PCCB family. In terms of assembly, acetyl-CoA carboxylase is a heterohexamer composed of biotin carboxyl carrier protein (AccB), biotin carboxylase (AccC) and two subunits each of ACCase subunit alpha (AccA) and ACCase subunit beta (AccD). Zn(2+) is required as a cofactor.

It is found in the cytoplasm. It carries out the reaction N(6)-carboxybiotinyl-L-lysyl-[protein] + acetyl-CoA = N(6)-biotinyl-L-lysyl-[protein] + malonyl-CoA. Its pathway is lipid metabolism; malonyl-CoA biosynthesis; malonyl-CoA from acetyl-CoA: step 1/1. Functionally, component of the acetyl coenzyme A carboxylase (ACC) complex. Biotin carboxylase (BC) catalyzes the carboxylation of biotin on its carrier protein (BCCP) and then the CO(2) group is transferred by the transcarboxylase to acetyl-CoA to form malonyl-CoA. This chain is Acetyl-coenzyme A carboxylase carboxyl transferase subunit beta, found in Synechococcus sp. (strain CC9311).